The following is a 179-amino-acid chain: Large ribosomal subunit protein uL5 (179 aa).

It belongs to the universal ribosomal protein uL5 family. Part of the 50S ribosomal subunit; part of the 5S rRNA/L5/L18/L25 subcomplex. Contacts the 5S rRNA and the P site tRNA. Forms a bridge to the 30S subunit in the 70S ribosome.

Its function is as follows. This is one of the proteins that bind and probably mediate the attachment of the 5S RNA into the large ribosomal subunit, where it forms part of the central protuberance. In the 70S ribosome it contacts protein S13 of the 30S subunit (bridge B1b), connecting the 2 subunits; this bridge is implicated in subunit movement. Contacts the P site tRNA; the 5S rRNA and some of its associated proteins might help stabilize positioning of ribosome-bound tRNAs. This chain is Large ribosomal subunit protein uL5, found in Sodalis glossinidius (strain morsitans).